A 694-amino-acid polypeptide reads, in one-letter code: Elongation factor G (694 aa).

Residues 10-285 (EKTRNIGIMA…AVLDYLPSPV (276 aa)) enclose the tr-type G domain. GTP is bound by residues 19 to 26 (AHIDAGKT), 83 to 87 (DTPGH), and 137 to 140 (NKMD).

Belongs to the TRAFAC class translation factor GTPase superfamily. Classic translation factor GTPase family. EF-G/EF-2 subfamily.

The protein resides in the cytoplasm. In terms of biological role, catalyzes the GTP-dependent ribosomal translocation step during translation elongation. During this step, the ribosome changes from the pre-translocational (PRE) to the post-translocational (POST) state as the newly formed A-site-bound peptidyl-tRNA and P-site-bound deacylated tRNA move to the P and E sites, respectively. Catalyzes the coordinated movement of the two tRNA molecules, the mRNA and conformational changes in the ribosome. This chain is Elongation factor G, found in Limosilactobacillus fermentum (strain NBRC 3956 / LMG 18251) (Lactobacillus fermentum).